A 213-amino-acid polypeptide reads, in one-letter code: Nucleolar protein 12 (213 aa).

The stretch at 32–95 (GFHKRKVERK…RLVTAKTESV (64 aa)) forms a coiled coil. A disordered region spans residues 117 to 213 (ARLLGLPTPE…LTGKARHSGE (97 aa)). Basic residues-rich tracts occupy residues 169–181 (AHSR…KRLR) and 197–213 (SKTR…HSGE).

Belongs to the RRP17 family. As to quaternary structure, interacts with KIAA1191.

Its subcellular location is the nucleus. It is found in the nucleolus. The protein resides in the cytoplasm. Functionally, multifunctional RNA binding protein that plays a role in RNA metabolism and DNA maintenance. Participates in the resolution of DNA stress and the maintenance of genome integrity by localizing to sites of DNA insults. Also plays a role in proper nucleolar organization by limiting nucleolar size and regulating nucleolar number. Mechanistically, regulates the nucleolar levels of fibrillarin and nucleolin, two key players in pre-rRNA processing and ribosome assembly. The sequence is that of Nucleolar protein 12 (NOL12) from Bos taurus (Bovine).